The primary structure comprises 159 residues: Peptide deformylase (159 aa).

Fe cation is bound by residues Cys-88 and His-130. Residue Glu-131 is part of the active site. His-134 serves as a coordination point for Fe cation.

The protein belongs to the polypeptide deformylase family. Fe(2+) serves as cofactor.

The enzyme catalyses N-terminal N-formyl-L-methionyl-[peptide] + H2O = N-terminal L-methionyl-[peptide] + formate. Functionally, removes the formyl group from the N-terminal Met of newly synthesized proteins. Requires at least a dipeptide for an efficient rate of reaction. N-terminal L-methionine is a prerequisite for activity but the enzyme has broad specificity at other positions. The chain is Peptide deformylase from Thermoanaerobacter pseudethanolicus (strain ATCC 33223 / 39E) (Clostridium thermohydrosulfuricum).